The sequence spans 335 residues: Holliday junction branch migration complex subunit RuvB (335 aa).

Residues 1-181 form a large ATPase domain (RuvB-L) region; that stretch reads MERIVEVEKF…FGMHFRLQFY (181 aa). ATP contacts are provided by residues Leu-20, Arg-21, Gly-62, Lys-65, Thr-66, Thr-67, 128–130, Arg-171, Tyr-181, and Arg-218; that span reads EDF. A Mg(2+)-binding site is contributed by Thr-66. The segment at 182-252 is small ATPAse domain (RuvB-S); the sequence is TPQELAQIIT…RTQKALEALG (71 aa). A head domain (RuvB-H) region spans residues 255–335; it reads ERGFDELDLK…LTPNIQNSLF (81 aa). 2 residues coordinate DNA: Arg-309 and Arg-314.

The protein belongs to the RuvB family. As to quaternary structure, homohexamer. Forms an RuvA(8)-RuvB(12)-Holliday junction (HJ) complex. HJ DNA is sandwiched between 2 RuvA tetramers; dsDNA enters through RuvA and exits via RuvB. An RuvB hexamer assembles on each DNA strand where it exits the tetramer. Each RuvB hexamer is contacted by two RuvA subunits (via domain III) on 2 adjacent RuvB subunits; this complex drives branch migration. In the full resolvosome a probable DNA-RuvA(4)-RuvB(12)-RuvC(2) complex forms which resolves the HJ.

It localises to the cytoplasm. It carries out the reaction ATP + H2O = ADP + phosphate + H(+). Functionally, the RuvA-RuvB-RuvC complex processes Holliday junction (HJ) DNA during genetic recombination and DNA repair, while the RuvA-RuvB complex plays an important role in the rescue of blocked DNA replication forks via replication fork reversal (RFR). RuvA specifically binds to HJ cruciform DNA, conferring on it an open structure. The RuvB hexamer acts as an ATP-dependent pump, pulling dsDNA into and through the RuvAB complex. RuvB forms 2 homohexamers on either side of HJ DNA bound by 1 or 2 RuvA tetramers; 4 subunits per hexamer contact DNA at a time. Coordinated motions by a converter formed by DNA-disengaged RuvB subunits stimulates ATP hydrolysis and nucleotide exchange. Immobilization of the converter enables RuvB to convert the ATP-contained energy into a lever motion, pulling 2 nucleotides of DNA out of the RuvA tetramer per ATP hydrolyzed, thus driving DNA branch migration. The RuvB motors rotate together with the DNA substrate, which together with the progressing nucleotide cycle form the mechanistic basis for DNA recombination by continuous HJ branch migration. Branch migration allows RuvC to scan DNA until it finds its consensus sequence, where it cleaves and resolves cruciform DNA. This Nitratiruptor sp. (strain SB155-2) protein is Holliday junction branch migration complex subunit RuvB.